The following is a 364-amino-acid chain: tRNA-specific 2-thiouridylase MnmA (364 aa).

ATP is bound by residues 13–20 and Met-39; that span reads GMSGGVDS. The segment at 99–101 is interaction with target base in tRNA; sequence NPD. Cys-104 acts as the Nucleophile in catalysis. A disulfide bond links Cys-104 and Cys-200. Gly-128 is an ATP binding site. The interval 150 to 152 is interaction with tRNA; that stretch reads KDQ. Catalysis depends on Cys-200, which acts as the Cysteine persulfide intermediate. The tract at residues 310 to 311 is interaction with tRNA; it reads RY.

This sequence belongs to the MnmA/TRMU family.

It is found in the cytoplasm. It carries out the reaction S-sulfanyl-L-cysteinyl-[protein] + uridine(34) in tRNA + AH2 + ATP = 2-thiouridine(34) in tRNA + L-cysteinyl-[protein] + A + AMP + diphosphate + H(+). Catalyzes the 2-thiolation of uridine at the wobble position (U34) of tRNA, leading to the formation of s(2)U34. This chain is tRNA-specific 2-thiouridylase MnmA, found in Alkaliphilus oremlandii (strain OhILAs) (Clostridium oremlandii (strain OhILAs)).